The primary structure comprises 83 residues: MADATEKAEHDRIFKKFDANGDGKISAAELGDALKNLGSVTHEDIKRMMAEIDTDGDGYISYQEFIDFASANRGLMKDVAKIF.

EF-hand domains lie at 5-40 (TEKA…LGSV) and 43-75 (EDIK…NRGL). Ca(2+) is bound by residues Asp-18, Asn-20, Asp-22, Lys-24, Glu-29, Asp-53, Asp-55, Asp-57, Tyr-59, and Glu-64.

Potential calcium sensor. This Arabidopsis thaliana (Mouse-ear cress) protein is Probable calcium-binding protein CML28 (CML28).